The following is a 231-amino-acid chain: uncharacterized protein (231 aa).

The SWIM-type zinc finger occupies 43–76 (YKVKVDLDNNYFGLCTCQYKYNCKHAYALIEAYE).

This is an uncharacterized protein from Methanocaldococcus jannaschii (strain ATCC 43067 / DSM 2661 / JAL-1 / JCM 10045 / NBRC 100440) (Methanococcus jannaschii).